The following is a 115-amino-acid chain: Large ribosomal subunit protein uL18 (115 aa).

Belongs to the universal ribosomal protein uL18 family. As to quaternary structure, part of the 50S ribosomal subunit; part of the 5S rRNA/L5/L18/L25 subcomplex. Contacts the 5S and 23S rRNAs.

This is one of the proteins that bind and probably mediate the attachment of the 5S RNA into the large ribosomal subunit, where it forms part of the central protuberance. This is Large ribosomal subunit protein uL18 from Mycoplasma genitalium (strain ATCC 33530 / DSM 19775 / NCTC 10195 / G37) (Mycoplasmoides genitalium).